A 363-amino-acid polypeptide reads, in one-letter code: Neurogenic differentiation factor 2 (363 aa).

Residues Met1–Glu116 form a disordered region. Over residues Glu28–Asp44 the composition is skewed to basic and acidic residues. Residues Ala64 to Asp83 show a composition bias toward acidic residues. A compositionally biased stretch (basic residues) spans Pro87–Thr98. Positions Lys93–Pro99 match the Nuclear localization signal motif. The bHLH domain maps to Val107–Leu159.

In terms of assembly, efficient DNA binding requires dimerization with another bHLH protein. In adult, expressed strongly in brain and more weakly in skin, muscle, eye and ovary.

Its subcellular location is the nucleus. Transcriptional regulator. Appears to mediate neuronal differentiation. The sequence is that of Neurogenic differentiation factor 2 from Danio rerio (Zebrafish).